We begin with the raw amino-acid sequence, 906 residues long: Protein translocase subunit SecA (906 aa).

ATP contacts are provided by residues Gln86, 104–108 (GEGKT), and Asp499. Positions 863–885 (PVVSRIDPKDRNPDDPTSWGRVS) are disordered. Cys890, Cys892, Cys901, and His902 together coordinate Zn(2+).

It belongs to the SecA family. Monomer and homodimer. Part of the essential Sec protein translocation apparatus which comprises SecA, SecYEG and auxiliary proteins SecDF-YajC and YidC. The cofactor is Zn(2+).

Its subcellular location is the cell inner membrane. The protein resides in the cytoplasm. It carries out the reaction ATP + H2O + cellular proteinSide 1 = ADP + phosphate + cellular proteinSide 2.. Functionally, part of the Sec protein translocase complex. Interacts with the SecYEG preprotein conducting channel. Has a central role in coupling the hydrolysis of ATP to the transfer of proteins into and across the cell membrane, serving both as a receptor for the preprotein-SecB complex and as an ATP-driven molecular motor driving the stepwise translocation of polypeptide chains across the membrane. This is Protein translocase subunit SecA from Rickettsia akari (strain Hartford).